The following is a 182-amino-acid chain: MGLLSILRKLKSTPDQEVRILLLGLDNAGKTTLLKQLASEDISHITPTQGFNIKSVQSQGFKLNVWDIGGQRKIRPYWRNYFENTDILIYVIDSADRKRFEETGQELAELLDEEKLSGVPVLIFANKQDLLTAAPASEIAEGLNLHTIRDRVWQIQSCSALSGEGVQDGMNWVCKNVSTKKK.

Residue glycine 2 is the site of N-myristoyl glycine attachment. GTP contacts are provided by residues glycine 24–threonine 31, aspartate 67–glutamine 71, and asparagine 126–aspartate 129.

This sequence belongs to the small GTPase superfamily. Arf family.

It localises to the golgi apparatus membrane. The protein localises to the cytoplasm. It is found in the cytoskeleton. The protein resides in the spindle. Its subcellular location is the nucleus. It localises to the microtubule organizing center. The protein localises to the centrosome. It is found in the cell projection. The protein resides in the cilium. Its function is as follows. Small GTP-binding protein which cycles between an inactive GDP-bound and an active GTP-bound form, and the rate of cycling is regulated by guanine nucleotide exchange factors (GEF) and GTPase-activating proteins (GAP). Required for normal cytokinesis and cilia signaling. Required for targeting proteins to the ciliary membrane by releasing myristoylated protein from unc119 cargo adapters into the cilium. The sequence is that of ADP-ribosylation factor-like protein 3 (ARL3) from Taeniopygia guttata (Zebra finch).